We begin with the raw amino-acid sequence, 364 residues long: Adenosine 3'-phospho 5'-phosphosulfate transporter 2 (364 aa).

The next 10 helical transmembrane spans lie at Trp39–Met59, Trp74–Ile94, Ile106–Gly126, Pro131–Ile151, Gly157–Ala177, Ser187–Ile206, Val231–Leu251, Thr257–Thr277, Val281–Leu301, and Phe310–Tyr330.

The protein belongs to the nucleotide-sugar transporter family. SLC35B subfamily.

The protein localises to the golgi apparatus membrane. Its function is as follows. Mediates the transport of adenosine 3'-phospho 5'-phosphosulfate (PAPS), from cytosol into Golgi. PAPS is a universal sulfuryl donor for sulfation events that take place in the Golgi. The sequence is that of Adenosine 3'-phospho 5'-phosphosulfate transporter 2 (pst-2) from Caenorhabditis elegans.